The following is a 316-amino-acid chain: Phosphoglycerate mutase-like protein AT74 (316 aa).

Residue His17 is the Tele-phosphohistidine intermediate of the active site. Residue Glu106 is the Proton donor/acceptor of the active site. The disordered stretch occupies residues 275-316 (KECETEATEDREEEEEEEGKRVNLLTSSEYSNEPELYNGQCC). The segment covering 279–291 (TEATEDREEEEEE) has biased composition (acidic residues).

The protein belongs to the phosphoglycerate mutase family. In terms of tissue distribution, expressed in roots, leaves, stems, flowers and siliques.

Its function is as follows. Phosphoglycerate mutase-like protein lacking PGM activity. May play a role in carbohydrates metabolism. The polypeptide is Phosphoglycerate mutase-like protein AT74 (Arabidopsis thaliana (Mouse-ear cress)).